The sequence spans 151 residues: UPF0208 membrane protein YfbV (151 aa).

The next 2 membrane-spanning stretches (helical) occupy residues 46–65 (YAIRFMPPIAVFTLCWQIAL) and 69–91 (LGPAVATALFALSLPMQGLWWLG).

The protein belongs to the UPF0208 family.

The protein resides in the cell inner membrane. In Shigella flexneri serotype 5b (strain 8401), this protein is UPF0208 membrane protein YfbV.